The chain runs to 101 residues: uncharacterized protein (101 aa).

This is an uncharacterized protein from Homo sapiens (Human).